Reading from the N-terminus, the 427-residue chain is 3-phosphoshikimate 1-carboxyvinyltransferase (427 aa).

3-phosphoshikimate is bound by residues K20, S21, and R25. Residue K20 coordinates phosphoenolpyruvate. G92 and R120 together coordinate phosphoenolpyruvate. S166, Q168, D312, and K339 together coordinate 3-phosphoshikimate. Q168 provides a ligand contact to phosphoenolpyruvate. D312 functions as the Proton acceptor in the catalytic mechanism. The phosphoenolpyruvate site is built by R343 and R385.

The protein belongs to the EPSP synthase family. As to quaternary structure, monomer.

It is found in the cytoplasm. It carries out the reaction 3-phosphoshikimate + phosphoenolpyruvate = 5-O-(1-carboxyvinyl)-3-phosphoshikimate + phosphate. Its pathway is metabolic intermediate biosynthesis; chorismate biosynthesis; chorismate from D-erythrose 4-phosphate and phosphoenolpyruvate: step 6/7. In terms of biological role, catalyzes the transfer of the enolpyruvyl moiety of phosphoenolpyruvate (PEP) to the 5-hydroxyl of shikimate-3-phosphate (S3P) to produce enolpyruvyl shikimate-3-phosphate and inorganic phosphate. This Streptococcus agalactiae serotype Ia (strain ATCC 27591 / A909 / CDC SS700) protein is 3-phosphoshikimate 1-carboxyvinyltransferase.